The chain runs to 67 residues: Probable pilin MJ1400 (67 aa).

A propeptide spanning residues 1–13 is cleaved from the precursor; sequence MKFIMKFIKSNKG. A QXSXEXXXL motif is present at residues 14–22; that stretch reads QISLEFSLL.

Post-translationally, the N-terminus is cleaved by the prepilin peptidase EppA, which recognizes the class III signal sequence.

It localises to the secreted. It is found in the cell surface. The protein resides in the fimbrium. The sequence is that of Probable pilin MJ1400 from Methanocaldococcus jannaschii (strain ATCC 43067 / DSM 2661 / JAL-1 / JCM 10045 / NBRC 100440) (Methanococcus jannaschii).